We begin with the raw amino-acid sequence, 382 residues long: Telomere-binding protein OPG082 (382 aa).

The protein belongs to the orthopoxvirus OPG082 family.

It is found in the virion. In terms of biological role, binds to the hairpin form of the viral telomeric sequence. Might direct genome encapsidation into the virus particle. The chain is Telomere-binding protein OPG082 (OPG082) from Variola virus (isolate Human/India/Ind3/1967) (VARV).